Reading from the N-terminus, the 302-residue chain is Dihydroorotate dehydrogenase B (NAD(+)), catalytic subunit (302 aa).

FMN contacts are provided by residues S23 and 47-48; that span reads KS. Substrate-binding positions include K47, 71-75, and N125; that span reads NAMGL. FMN is bound at residue N125. The Nucleophile role is filled by C128. Residues K163 and I189 each coordinate FMN. 190-191 contacts substrate; the sequence is NT. Residues G215, 241 to 242, and 263 to 264 contribute to the FMN site; these read GG and GT.

The protein belongs to the dihydroorotate dehydrogenase family. Type 1 subfamily. Heterotetramer of 2 PyrK and 2 PyrD type B subunits. FMN serves as cofactor.

It is found in the cytoplasm. It catalyses the reaction (S)-dihydroorotate + NAD(+) = orotate + NADH + H(+). Its pathway is pyrimidine metabolism; UMP biosynthesis via de novo pathway; orotate from (S)-dihydroorotate (NAD(+) route): step 1/1. Catalyzes the conversion of dihydroorotate to orotate with NAD(+) as electron acceptor. The sequence is that of Dihydroorotate dehydrogenase B (NAD(+)), catalytic subunit (pyrD) from Thermococcus kodakarensis (strain ATCC BAA-918 / JCM 12380 / KOD1) (Pyrococcus kodakaraensis (strain KOD1)).